Consider the following 356-residue polypeptide: Tyrosine recombinase XerS (356 aa).

Residues 16–121 (LMPWYVLEYY…ALSSLYKYLT (106 aa)) enclose the Core-binding (CB) domain. Positions 169 to 354 (GFLTYIDQEH…VNDEQKNALD (186 aa)) constitute a Tyr recombinase domain. Catalysis depends on residues arginine 210, lysine 234, histidine 306, arginine 309, and histidine 332. Tyrosine 341 (O-(3'-phospho-DNA)-tyrosine intermediate) is an active-site residue.

Belongs to the 'phage' integrase family. XerS subfamily.

It localises to the cytoplasm. With respect to regulation, ftsK is required for recombination. Site-specific tyrosine recombinase, which acts by catalyzing the cutting and rejoining of the recombining DNA molecules. Essential to convert dimers of the bacterial chromosome into monomers to permit their segregation at cell division. In Streptococcus pneumoniae serotype 19F (strain G54), this protein is Tyrosine recombinase XerS.